We begin with the raw amino-acid sequence, 215 residues long: UPF0502 protein YceH (215 aa).

Belongs to the UPF0502 family.

The chain is UPF0502 protein YceH from Salmonella schwarzengrund (strain CVM19633).